The primary structure comprises 84 residues: MTRTNKWTEREGKADPKYFSHTGNYGESPNHIKKQGSGKGNWGKPGDEIDDLIDNGEIPPVFKKDRRGSNLQSHEQKFENVQKE.

Over residues 1 to 18 the composition is skewed to basic and acidic residues; sequence MTRTNKWTEREGKADPKY. A disordered region spans residues 1–84; it reads MTRTNKWTER…EQKFENVQKE (84 aa). A phosphoserine mark is found at serine 28 and serine 69. The segment covering 74 to 84 has biased composition (basic and acidic residues); that stretch reads HEQKFENVQKE.

It belongs to the STF2 family.

The protein localises to the mitochondrion. Its subcellular location is the cytoplasm. Its function is as follows. Found to stabilize, together with STF1, a complex of intrinsic ATPase inhibitor INH1 and proton-translocating ATPase (F(1)F(0)-ATPase) in mitochondrial membranes. Binds to the F0 part and may function to hold the ATPase inhibitor or STF1 on the F1 subunit. Also acts as a hydrophilins that enhances dry stress tolerance. Cell viability after desiccation and rehydration is due to the antioxidant capacity of the protein, which reduces the number of apoptotic cells during stress conditions by minimising the accumulation of reactive oxygen species (ROS) in the cells. In Saccharomyces cerevisiae (strain ATCC 204508 / S288c) (Baker's yeast), this protein is ATPase-stabilizing factor 15 kDa protein (STF2).